The primary structure comprises 286 residues: Shikimate dehydrogenase (NADP(+)) (286 aa).

Residues 19–21 and threonine 66 each bind shikimate; that span reads SFS. Residue lysine 70 is the Proton acceptor of the active site. Asparagine 91 and aspartate 107 together coordinate shikimate. Residues 129–133 and leucine 229 contribute to the NADP(+) site; that span reads GSGGA. Tyrosine 231 lines the shikimate pocket. Glycine 252 is an NADP(+) binding site.

The protein belongs to the shikimate dehydrogenase family. Homodimer.

It catalyses the reaction shikimate + NADP(+) = 3-dehydroshikimate + NADPH + H(+). Its pathway is metabolic intermediate biosynthesis; chorismate biosynthesis; chorismate from D-erythrose 4-phosphate and phosphoenolpyruvate: step 4/7. In terms of biological role, involved in the biosynthesis of the chorismate, which leads to the biosynthesis of aromatic amino acids. Catalyzes the reversible NADPH linked reduction of 3-dehydroshikimate (DHSA) to yield shikimate (SA). The sequence is that of Shikimate dehydrogenase (NADP(+)) from Prochlorococcus marinus (strain MIT 9301).